An 824-amino-acid chain; its full sequence is Glycerol-3-phosphate acyltransferase (824 aa).

The short motif at 302 to 307 (CHRSHM) is the HXXXXD motif element.

The protein belongs to the GPAT/DAPAT family.

The protein localises to the cell inner membrane. The enzyme catalyses sn-glycerol 3-phosphate + an acyl-CoA = a 1-acyl-sn-glycero-3-phosphate + CoA. It functions in the pathway phospholipid metabolism; CDP-diacylglycerol biosynthesis; CDP-diacylglycerol from sn-glycerol 3-phosphate: step 1/3. The polypeptide is Glycerol-3-phosphate acyltransferase (Actinobacillus pleuropneumoniae serotype 3 (strain JL03)).